We begin with the raw amino-acid sequence, 114 residues long: Aspartate 1-decarboxylase (114 aa).

Residue serine 25 is the Schiff-base intermediate with substrate; via pyruvic acid of the active site. Serine 25 is subject to Pyruvic acid (Ser). Threonine 57 contacts substrate. Tyrosine 58 serves as the catalytic Proton donor. 71–73 (GAA) serves as a coordination point for substrate.

It belongs to the PanD family. Heterooctamer of four alpha and four beta subunits. The cofactor is pyruvate. Post-translationally, is synthesized initially as an inactive proenzyme, which is activated by self-cleavage at a specific serine bond to produce a beta-subunit with a hydroxyl group at its C-terminus and an alpha-subunit with a pyruvoyl group at its N-terminus.

The protein localises to the cytoplasm. It carries out the reaction L-aspartate + H(+) = beta-alanine + CO2. It functions in the pathway cofactor biosynthesis; (R)-pantothenate biosynthesis; beta-alanine from L-aspartate: step 1/1. Catalyzes the pyruvoyl-dependent decarboxylation of aspartate to produce beta-alanine. The chain is Aspartate 1-decarboxylase from Haloquadratum walsbyi (strain DSM 16790 / HBSQ001).